Consider the following 125-residue polypeptide: Linear element protein rec27 (125 aa).

The stretch at 45–104 (KTNIENEKKAFIKDVSQVQQKIKEFEIQKANQIKQLNEEKLSIEARKQQLEIEIRNQLLQ) forms a coiled coil.

Component of linear elements (LinEs), which are similar to synaptonemal complexes, at least composed of rec27, rec25, rec10 and mug20.

It localises to the cytoplasm. The protein localises to the nucleus. The protein resides in the chromosome. In terms of biological role, during meiotic DNA recombination, binds to and activates DNA double-strand break (DSB) hotspot sites. The chain is Linear element protein rec27 from Schizosaccharomyces pombe (strain 972 / ATCC 24843) (Fission yeast).